A 1140-amino-acid chain; its full sequence is MVGWVCIFLVVLTTATAGLTRNLYELKIECPHTVGLGQGYVTGSVEITPILLTQVADLKIESSCNFDLHVPATTTQKYNQVDWTKKSSTTESTNAGATTFEAKTKEINLKGTCNIPPTTFEAAYKSRKTVICYDLACNQTHCLPTVHLIAPVQTCMSVRSCMIGLLSSRIQVIYEKTYCVTGQLIEGLCFIPTHTIALTQPGHTYDTMTLPVTCFLVAKKLGTQLKLAVELEKLITGVSCTENSFQGYYICFIGKHSEPLFVPTMEDYRSAELFTRMVLNPRGEDHDPDQNGQGLMRIAGPVTAKVPSTETTETMQGIAFAGAPMYSSFSTLVRKADPEYVFSPGIIAESNHSVCDKKTVPLTWTGFLAVSGEIEKITGCTVFCTLAGPGASCEAYSETGIFNISSPTCLVNKVQKFRGSEQRINFMCQRVDQDVVVYCNGQKKVILTKTLVIGQCIYTFTSLFSLIPGVAHSLAVELCVPGLHGWATTALLITFCFGWLLIPAVTLIILKILRLLTFSCSHYSTESKFKVILERVKVEYQKTMGSMVCDICHHECETAKELETHKKSCPEGQCPYCMTITESTESALQAHFAICKLTNRFQENLKKSLKRPEVRKGCYRTLGVFRYKSRCYVGLVWGILLTTELIIWAASADTPLMESGWSDTAHGVGIIPMKTDLELDFALASSSSYSYRRKLVNPANQEETLPFHFQLDKQVVHAEIQNLGHWMDGTFNIKTAFHCYGECKKYAYPWQTAKCFFEKDYQYETSWGCNPPDCPGVGTGCTACGVYLDKLRSVGKAYKIVSLKYTRKVCIQLGTEQTCKHIDVNDCLVTPSVKVCMIGTISKLQPGDTLLFLGPLEQGGIILKQWCTTSCVFGDPGDIMSTTSGMRCPEHTGSFRKICGFATTPTCEYQGNTVSGFQRMMATRDSFQSFNVTEPHITSNRLEWIDPDSSIKDHINMVLNRDVSFQDLSDNPCKVDLHTQSIDGAWGSGVGFTLVCTVGLTECANFITSIKACDSAMCYGATVTNLLRGSNTVKVVGKGGHSGSLFKCCHDTDCTEEGLAASPPHLDRVTGYNQIDSDKVYDDGAPPCTIKCWFTKSGEWLLGILNGNWVVVAVLIVILILSILLFSFFCPVRSRKNKAN.

A signal peptide spans 1-17; that stretch reads MVGWVCIFLVVLTTATA. The Lumenal portion of the chain corresponds to 18 to 480; the sequence is GLTRNLYELK…AHSLAVELCV (463 aa). 6 disulfides stabilise this stretch: Cys-30/Cys-155, Cys-64/Cys-161, Cys-113/Cys-132, Cys-137/Cys-142, Cys-179/Cys-189, and Cys-214/Cys-251. The N-linked (GlcNAc...) asparagine; by host glycan is linked to Asn-138. Asn-351 carries N-linked (GlcNAc...) asparagine; by host glycosylation. Intrachain disulfides connect Cys-380–Cys-439, Cys-384–Cys-393, Cys-409–Cys-428, and Cys-456–Cys-479. N-linked (GlcNAc...) asparagine; by host glycosylation is present at Asn-403. Residues 490–510 form a helical membrane-spanning segment; the sequence is ALLITFCFGWLLIPAVTLIIL. Residues 511–631 are Cytoplasmic-facing; that stretch reads KILRLLTFSC…LGVFRYKSRC (121 aa). The tract at residues 520–537 is binding to the ribonucleoprotein; that stretch reads CSHYSTESKFKVILERVK. 2 CCHC-type zinc fingers span residues 549 to 569 and 574 to 595; these read CDICHHECETAKELETHKKSC and CPYCMTITESTESALQAHFAIC. 3 binding to the ribonucleoprotein regions span residues 592–609, 596–607, and 615–629; these read FAICKLTNRFQENLKKSL, KLTNRFQENLKK, and RKGCYRTLGVFRYKS. Residues 615–638 form the ITAM domain; that stretch reads RKGCYRTLGVFRYKSRCYVGLVWG. Tyr-619 and Tyr-632 each carry phosphotyrosine. The short motif at 619 to 622 is the YxxL element; it reads YRTL. Residues 632 to 652 form a helical membrane-spanning segment; it reads YVGLVWGILLTTELIIWAASA. Residues 653 to 1108 are Lumenal-facing; sequence DTPLMESGWS…EWLLGILNGN (456 aa). 8 disulfide bridges follow: Cys-739-Cys-774, Cys-743-Cys-781, Cys-755-Cys-888, Cys-769-Cys-899, Cys-784-Cys-907, Cys-810-Cys-819, Cys-827-Cys-836, and Cys-867-Cys-871. The interval 761–781 is fusion loop; the sequence is YQYETSWGCNPPDCPGVGTGC. The N-linked (GlcNAc...) asparagine; by host glycan is linked to Asn-931. Disulfide bonds link Cys-973–Cys-1003, Cys-996–Cys-1048, Cys-1013–Cys-1018, Cys-1049–Cys-1054, and Cys-1088–Cys-1092. Residues 1109–1129 form a helical membrane-spanning segment; it reads WVVVAVLIVILILSILLFSFF. Positions 1125–1140 are binding to the ribonucleoprotein; sequence LFSFFCPVRSRKNKAN. Topologically, residues 1130–1140 are cytoplasmic; it reads CPVRSRKNKAN.

This sequence belongs to the hantavirus envelope glycoprotein family. Homodimer. Homotetramer; forms heterotetrameric Gn-Gc spikes in the pre-fusion conformation. Interacts (via C-terminus) with the nucleoprotein. Interacts with host TUFM; this interaction contributes to the virus-induced degradation of mitochondria by autophagy, which leads to degradation of host MAVS and inhibition of type I interferon (IFN) responses. Interacts with host MAP1LC3B; this interaction contributes to the virus-induced degradation of mitochondria by autophagy, which leads to degradation of host MAVS and inhibition of type I interferon (IFN) responses. As to quaternary structure, homodimer. Homotetramer; forms heterotetrameric Gn-Gc spikes in the pre-fusion conformation. Homotrimer; forms homotrimer in the post-fusion conformation at acidic pH. Interacts (via C-terminus) with the nucleoprotein. In terms of processing, envelope polyprotein precursor is quickly cleaved in vivo just after synthesis, presumably by host signal peptidase.

It localises to the virion membrane. Its subcellular location is the host cell surface. The protein localises to the host Golgi apparatus membrane. The protein resides in the host endoplasmic reticulum membrane. It is found in the host mitochondrion. In terms of biological role, forms homotetramers with glycoprotein C at the surface of the virion. Attaches the virion to host cell receptors including integrin ITGAV/ITGB3. This attachment induces virion internalization predominantly through clathrin-dependent endocytosis. Mediates the assembly and budding of infectious virus particles through its interaction with the nucleocapsid protein and the viral genome. May dysregulate normal immune and endothelial cell responses through an ITAM motif. Translocates to mitochondria, binds to host TUFM and recruits MAP1LC3B. These interactions induce mitochondrial autophagy and therefore destruction of host MAVS leading to inhibition of type I interferon (IFN) responses. Concomitant breakdown of glycoprotein N is apparently prevented by the nucleoprotein that may inhibit Gn-stimulated autophagosome-lysosome fusion. Interacts with the viral genomic RNA. Its function is as follows. Forms homotetramers with glycoprotein N at the surface of the virion. Attaches the virion to host cell receptors including integrin ITGAV/ITGB3. This attachment induces virion internalization predominantly through clathrin-dependent endocytosis. Class II fusion protein that promotes fusion of viral membrane with host endosomal membrane after endocytosis of the virion. The chain is Envelopment polyprotein (GP) from Sin Nombre orthohantavirus (SNV).